We begin with the raw amino-acid sequence, 304 residues long: Oxygen-dependent coproporphyrinogen-III oxidase (304 aa).

Substrate is bound at residue Ser-94. Positions 98 and 108 each coordinate a divalent metal cation. Residue His-108 is the Proton donor of the active site. 110-112 (NVR) is a binding site for substrate. A divalent metal cation is bound by residues His-147 and His-177. Positions 242 to 277 (YVEFNLVYDRGTLFGLQSGGRTESILMSLPPVAHWR) are important for dimerization. 260-262 (GGR) contacts substrate.

It belongs to the aerobic coproporphyrinogen-III oxidase family. In terms of assembly, homodimer. It depends on a divalent metal cation as a cofactor.

Its subcellular location is the cytoplasm. The catalysed reaction is coproporphyrinogen III + O2 + 2 H(+) = protoporphyrinogen IX + 2 CO2 + 2 H2O. It participates in porphyrin-containing compound metabolism; protoporphyrin-IX biosynthesis; protoporphyrinogen-IX from coproporphyrinogen-III (O2 route): step 1/1. In terms of biological role, involved in the heme biosynthesis. Catalyzes the aerobic oxidative decarboxylation of propionate groups of rings A and B of coproporphyrinogen-III to yield the vinyl groups in protoporphyrinogen-IX. The sequence is that of Oxygen-dependent coproporphyrinogen-III oxidase from Methylococcus capsulatus (strain ATCC 33009 / NCIMB 11132 / Bath).